A 439-amino-acid polypeptide reads, in one-letter code: Sodium-dependent phosphate transport protein 3 (439 aa).

N-linked (GlcNAc...) asparagine glycosylation is found at Asn-47, Asn-56, Asn-68, and Asn-69. The next 9 helical transmembrane spans lie at 98-118, 130-150, 183-203, 211-231, 273-293, 317-337, 350-369, 374-396, and 415-435; these read INYG…IFGA, SLLT…VIMV, TIAG…GGLI, FIFY…FTVI, LPLW…TIIL, LPFI…DFLL, LFSS…LPFV, VITI…GFII, and GFGL…ISQV.

The protein belongs to the major facilitator superfamily. Sodium/anion cotransporter family. In terms of tissue distribution, expressed in the small intestine, kidney, spleen and testis. Not detected in fetal brain, bone marrow, and mammary gland.

The protein resides in the apical cell membrane. The enzyme catalyses 3 Na(+)(out) + phosphate(out) = 3 Na(+)(in) + phosphate(in). The catalysed reaction is urate(out) + n chloride(in) = urate(in) + n chloride(out). Its function is as follows. Acts as a membrane potential-dependent organic anion transporter, the transport requires a low concentration of chloride ions. Mediates chloride-dependent transport of urate. Can actively transport inorganic phosphate into cells via Na(+) cotransport. This is Sodium-dependent phosphate transport protein 3 (SLC17A2) from Homo sapiens (Human).